Consider the following 65-residue polypeptide: U11-theraphotoxin-Cg1b (65 aa).

The first 21 residues, 1–21 (MKTTILVVILGLTLLFALSAA), serve as a signal peptide directing secretion. The propeptide occupies 22 to 29 (TELKDEER). 3 disulfides stabilise this stretch: Cys31/Cys45, Cys38/Cys50, and Cys44/Cys57.

This sequence belongs to the neurotoxin 10 (Hwtx-1) family. 32 (Jztx-16) subfamily. As to expression, expressed by the venom gland.

It localises to the secreted. Functionally, probable ion channel inhibitor. The protein is U11-theraphotoxin-Cg1b of Chilobrachys guangxiensis (Chinese earth tiger tarantula).